A 359-amino-acid polypeptide reads, in one-letter code: Prostaglandin D2 receptor (359 aa).

Over 1–21 (MKSPFYRCQNTTSVEKGNSAV) the chain is Extracellular. Asn-10 carries an N-linked (GlcNAc...) asparagine glycan. A helical transmembrane segment spans residues 22-42 (MGGVLFSTGLLGNLLALGLLA). Residues 43-59 (RSGLGWCSRRPLRPLPS) lie on the Cytoplasmic side of the membrane. Residues 60–80 (VFYMLVCGLTVTDLLGKCLLS) form a helical membrane-spanning segment. Residues 81 to 107 (PVVLAAYAQNRSLRVLAPALDNSLCQA) are Extracellular-facing. N-linked (GlcNAc...) asparagine glycosylation occurs at Asn-90. Cys-105 and Cys-183 are joined by a disulfide. Residues 108-128 (FAFFMSFFGLSSTLQLLAMAL) form a helical membrane-spanning segment. At 129–150 (ECWLSLGHPFFYRRHITLRLGA) the chain is on the cytoplasmic side. The chain crosses the membrane as a helical span at residues 151 to 171 (LVAPVVSAFSLAFCALPFMGF). At 172–195 (GKFVQYCPGTWCFIQMVHEEGSLS) the chain is on the extracellular side. The chain crosses the membrane as a helical span at residues 196-216 (VLGYSVLYSSLMALLVLATVL). Residues 217-262 (CNLGAMRNLYAMHRRLQRHPRSCTRDCAEPRADGREASPQPLEELD) are Cytoplasmic-facing. A helical transmembrane segment spans residues 263-283 (HLLLLALMTVLFTMCSLPVIY). Residues 284-310 (RAYYGAFKDVKEKNRTSEEAEDLRALR) are Extracellular-facing. Residue Asn-297 is glycosylated (N-linked (GlcNAc...) asparagine). Residues 311–331 (FLSVISIVDPWIFIIFRSPVF) traverse the membrane as a helical segment. At 332–359 (RIFFHKIFIRPLRYRSRCSNSTNMESSL) the chain is on the cytoplasmic side.

It belongs to the G-protein coupled receptor 1 family. In terms of tissue distribution, expressed in retinal choroid, ciliary epithelium, longitudinal and circular ciliary muscles, iris, small intestine and platelet membranes.

The protein resides in the cell membrane. Its function is as follows. Receptor for prostaglandin D2 (PGD2). The activity of this receptor is mainly mediated by G(s) proteins that stimulate adenylate cyclase, resulting in an elevation of intracellular cAMP. A mobilization of calcium is also observed, but without formation of inositol 1,4,5-trisphosphate. Involved in PLA2G3-dependent maturation of mast cells. PLA2G3 is secreted by immature mast cells and acts on nearby fibroblasts upstream to PTDGS to synthesize PGD2, which in turn promotes mast cell maturation and degranulation via PTGDR. The protein is Prostaglandin D2 receptor (PTGDR) of Homo sapiens (Human).